The primary structure comprises 568 residues: Sentrin-specific protease 3 (568 aa).

Residues 1–119 (MKETIQGTGS…PSHRKTCSQR (119 aa)) form a disordered region. Phosphoserine occurs at positions 52, 71, and 73. Residues 72–87 (ASEEEEEEEEEDEEEV) are compositionally biased toward acidic residues. Residues 106-119 (RALRPSHRKTCSQR) show a composition bias toward basic residues. 2 consecutive short sequence motifs (nuclear localization signal) follow at residues 119 to 122 (RRRR) and 147 to 153 (RHRGRRR). Residues 155-174 (LAHPKNHLSPQEGGATPQVP) are disordered. Residue S163 is modified to Phosphoserine. Phosphothreonine is present on T170. 4 positions are modified to phosphoserine: S175, S182, S206, and S226. The protease stretch occupies residues 380–537 (HVLTMDDLGT…AFVLQYCKHL (158 aa)). Residues H459 and D476 contribute to the active site. C526 serves as the catalytic Nucleophile.

This sequence belongs to the peptidase C48 family. In terms of assembly, component of some MLL1/MLL complex, at least composed of the core components KMT2A/MLL1, ASH2L, HCFC1/HCF1, WDR5 and RBBP5, as well as the facultative components BACC1, CHD8, E2F6, HSP70, INO80C, KANSL1, LAS1L, MAX, MCRS1, MGA, MYST1/MOF, PELP1, PHF20, PRP31, RING2, RUVB1/TIP49A, RUVB2/TIP49B, SENP3, TAF1, TAF4, TAF6, TAF7, TAF9 and TEX10. Interacts with EP300, NPM1 and CDCA8. Component of the 5FMC complex, at least composed of PELP1, LAS1L, TEX10, WDR18 and SENP3; the complex interacts with methylated CHTOP and ZNF148. Interacts with NOL9. Interacts with CCAR2.

The protein resides in the nucleus. The protein localises to the nucleolus. Its subcellular location is the nucleoplasm. It localises to the cytoplasm. With respect to regulation, on oxidative stress, SENP3 degradation is blocked by inhibition of its ubiquitination, which stabilizes it as it accumulates in the nucleoplasm. In terms of biological role, protease that releases SUMO2 and SUMO3 monomers from sumoylated substrates, but has only weak activity against SUMO1 conjugates. Deconjugates SUMO2 from MEF2D, which increases its transcriptional activation capability. Deconjugates SUMO2 and SUMO3 from CDCA8. Redox sensor that, when redistributed into nucleoplasm, can act as an effector to enhance HIF1A transcriptional activity by desumoylating EP300. Required for rRNA processing through deconjugation of SUMO2 and SUMO3 from nucleophosmin, NPM1. Plays a role in the regulation of sumoylation status of ZNF148. Functions as a component of the Five Friends of Methylated CHTOP (5FMC) complex; the 5FMC complex is recruited to ZNF148 by methylated CHTOP, leading to desumoylation of ZNF148 and subsequent transactivation of ZNF148 target genes. Deconjugates SUMO2 from KAT5. Catalyzes desumoylation of MRE11. In Mus musculus (Mouse), this protein is Sentrin-specific protease 3 (Senp3).